Consider the following 758-residue polypeptide: Matrix metalloproteinase-2 (758 aa).

The N-terminal stretch at 1-17 (MFSKYVLATLLALFAQS) is a signal peptide. Residue histidine 257 coordinates Zn(2+). The active site involves glutamate 258. Zn(2+)-binding residues include histidine 261 and histidine 267. The interval 335–514 (AYWPWNNPSN…HNKPRKPKPD (180 aa)) is disordered. Low complexity predominate over residues 338–348 (PWNNPSNNPNN). A compositionally biased stretch (basic and acidic residues) spans 349–476 (DRNRARERQE…EWERRNRNGA (128 aa)). A compositionally biased stretch (low complexity) spans 479-494 (PVTPTANTTPRPTNKP). Residues 499-510 (HRQHHHHNKPRK) show a composition bias toward basic residues. Hemopexin repeat units follow at residues 513–561 (PDSC…WSAL), 565–610 (LTKV…GLPP), 612–659 (LTHI…WSGV), and 660–707 (GYNI…WMQC). A disulfide bond links cysteine 516 and cysteine 707. A helical transmembrane segment spans residues 739 to 756 (LRINHFILSILLLAIANW). Residues 757–758 (RS) are Cytoplasmic-facing.

The protein belongs to the peptidase M10A family. Ca(2+) is required as a cofactor. Requires Zn(2+) as cofactor. As to expression, widely expressed during embryogenesis including in the mesoderm, developing gut, central and peripheral nervous systems and imaginal disks. In the embryonic nervous system, expressed in neurons and glia. In third instar larvae, strongly expressed in the morphogenetic furrow of eye imaginal disks and in the optic lobe region of the brain. Expressed in posterior follicle cells in all mature stage 14 follicles but not in earlier follicles and is also expressed in some anterior follicle cells that help form dorsal eggshell structures.

The protein localises to the cell membrane. In terms of biological role, has metalloproteinase activity. Proteolytically cleaves the PGRP-LC receptor; involved in gut-fat body innate immunological communication (GFIC)-mediated activation of the imd/Relish signal transduction pathway. Required for larval tissue histolysis during metamorphosis and is involved in pupal head eversion and fusion of the wing imaginal tissue. Required for growth of the dorsal air sac primordium and development of the dorsal air sacs. Promotes embryonic motor axon fasciculation. Cleaves and activates frac to promote motor axon bundling during outgrowth. Promotes the reshaping of adult sensory neuron dendrites from a radial to lattice-like shape which occurs after eclosion by degrading the basement membrane on which the dendrites grow. Involved in inhibition of follicle stem cell proliferation by cleaving Dlp, inhibiting its interaction with wg and preventing Dlp-mediated spreading of wg to follicle stem cells to enhance their proliferation. Plays a role in wound healing. Involved in fat body dissociation which occurs during metamorphosis by degrading basement membrane components, leading to destruction of cell-basement membrane junctions. Required for posterior follicle cell degradation and ovulation. In Drosophila melanogaster (Fruit fly), this protein is Matrix metalloproteinase-2.